The primary structure comprises 401 residues: 8-amino-7-oxononanoate synthase (401 aa).

Arg-19 contributes to the substrate binding site. 106–107 is a pyridoxal 5'-phosphate binding site; sequence GY. His-131 is a binding site for substrate. Ser-176, His-204, and Thr-233 together coordinate pyridoxal 5'-phosphate. The residue at position 236 (Lys-236) is an N6-(pyridoxal phosphate)lysine. Residue Thr-350 participates in substrate binding.

Belongs to the class-II pyridoxal-phosphate-dependent aminotransferase family. BioF subfamily. In terms of assembly, homodimer. The cofactor is pyridoxal 5'-phosphate.

The catalysed reaction is 6-carboxyhexanoyl-[ACP] + L-alanine + H(+) = (8S)-8-amino-7-oxononanoate + holo-[ACP] + CO2. The protein operates within cofactor biosynthesis; biotin biosynthesis. Functionally, catalyzes the decarboxylative condensation of pimeloyl-[acyl-carrier protein] and L-alanine to produce 8-amino-7-oxononanoate (AON), [acyl-carrier protein], and carbon dioxide. The protein is 8-amino-7-oxononanoate synthase of Pseudomonas aeruginosa (strain LESB58).